Here is a 589-residue protein sequence, read N- to C-terminus: ATP-dependent lipid A-core flippase (589 aa).

6 helical membrane passes run 37-57 (ALAI…PALL), 72-92 (LWLV…SGFL), 151-171 (IMKL…LVYL), 173-193 (WKLM…IQVL), 260-280 (SAIT…IALL), and 286-306 (TTTV…IAPV). Residues 37 to 318 (ALAIGATIVA…LSDAATPVTR (282 aa)) enclose the ABC transmembrane type-1 domain. The 235-residue stretch at 350-584 (IEFADVSVIY…NGAYAHLYRL (235 aa)) folds into the ABC transporter domain. 384-391 (GASGSGKT) is an ATP binding site.

Belongs to the ABC transporter superfamily. Lipid exporter (TC 3.A.1.106) family. Homodimer.

It is found in the cell inner membrane. The enzyme catalyses ATP + H2O + lipid A-core oligosaccharideSide 1 = ADP + phosphate + lipid A-core oligosaccharideSide 2.. Involved in lipopolysaccharide (LPS) biosynthesis. Translocates lipid A-core from the inner to the outer leaflet of the inner membrane. Transmembrane domains (TMD) form a pore in the inner membrane and the ATP-binding domain (NBD) is responsible for energy generation. The sequence is that of ATP-dependent lipid A-core flippase from Polaromonas sp. (strain JS666 / ATCC BAA-500).